The sequence spans 886 residues: Leucine--tRNA ligase (886 aa).

Positions 51-61 (PYPSGRIHMGH) match the 'HIGH' region motif. The short motif at 644 to 648 (KMSKS) is the 'KMSKS' region element. Lys647 is a binding site for ATP.

The protein belongs to the class-I aminoacyl-tRNA synthetase family.

The protein resides in the cytoplasm. The enzyme catalyses tRNA(Leu) + L-leucine + ATP = L-leucyl-tRNA(Leu) + AMP + diphosphate. The sequence is that of Leucine--tRNA ligase from Bartonella tribocorum (strain CIP 105476 / IBS 506).